Reading from the N-terminus, the 172-residue chain is Interferon tau-3 (172 aa).

Cystine bridges form between C1/C99 and C29/C139.

It belongs to the alpha/beta interferon family. IFN-alphaII subfamily. Constitutively and exclusively expressed in the mononuclear cells of the extraembryonic trophectoderm.

The protein resides in the secreted. In terms of biological role, paracrine hormone primarily responsible for maternal recognition of pregnancy. Interacts with endometrial receptors, probably type I interferon receptors, and blocks estrogen receptor expression, preventing the estrogen-induced increase in oxytocin receptor expression in the endometrium. This results in the suppression of the pulsatile endometrial release of the luteolytic hormone prostaglandin F2-alpha, hindering the regression of the corpus luteum (luteolysis) and therefore a return to ovarian cyclicity. This, and a possible direct effect of IFN-tau on prostaglandin synthesis, leads in turn to continued ovarian progesterone secretion, which stimulates the secretion by the endometrium of the nutrients required for the growth of the conceptus. In summary, displays particularly high antiviral and antiproliferative potency concurrently with particular weak cytotoxicity, high antiluteolytic activity and immunomodulatory properties. In contrast with other IFNs, IFN-tau is not virally inducible. The protein is Interferon tau-3 (IFNT3) of Ovis aries (Sheep).